The sequence spans 504 residues: Maturase K (504 aa).

This sequence belongs to the intron maturase 2 family. MatK subfamily.

It localises to the plastid. Its subcellular location is the chloroplast. In terms of biological role, usually encoded in the trnK tRNA gene intron. Probably assists in splicing its own and other chloroplast group II introns. The chain is Maturase K from Pachira aquatica (Guiana chestnut).